A 708-amino-acid chain; its full sequence is ABC transporter G family member 18 (708 aa).

Positions R75–E317 constitute an ABC transporter domain. An ATP-binding site is contributed by G109 to S116. The region spanning A402 to F612 is the ABC transmembrane type-2 domain. A run of 7 helical transmembrane segments spans residues L421–W441, F456–I476, L508–G528, L537–I557, V560–F580, L589–I609, and L681–F701.

Belongs to the ABC transporter superfamily. ABCG family. Eye pigment precursor importer (TC 3.A.1.204) subfamily.

It is found in the membrane. This Arabidopsis thaliana (Mouse-ear cress) protein is ABC transporter G family member 18 (ABCG18).